A 1025-amino-acid chain; its full sequence is Error-prone DNA polymerase (1025 aa).

It belongs to the DNA polymerase type-C family. DnaE2 subfamily.

It is found in the cytoplasm. It catalyses the reaction DNA(n) + a 2'-deoxyribonucleoside 5'-triphosphate = DNA(n+1) + diphosphate. Functionally, DNA polymerase involved in damage-induced mutagenesis and translesion synthesis (TLS). It is not the major replicative DNA polymerase. The chain is Error-prone DNA polymerase from Alkalilimnicola ehrlichii (strain ATCC BAA-1101 / DSM 17681 / MLHE-1).